Here is a 334-residue protein sequence, read N- to C-terminus: Glycerol-3-phosphate dehydrogenase [NAD(P)+] (334 aa).

Positions 14, 15, 35, and 109 each coordinate NADPH. Residues K109, G138, and T140 each contribute to the sn-glycerol 3-phosphate site. A142 is an NADPH binding site. 5 residues coordinate sn-glycerol 3-phosphate: K194, D247, S257, R258, and N259. The active-site Proton acceptor is the K194. Residue R258 coordinates NADPH. Residues V282 and E284 each contribute to the NADPH site.

It belongs to the NAD-dependent glycerol-3-phosphate dehydrogenase family.

The protein resides in the cytoplasm. It carries out the reaction sn-glycerol 3-phosphate + NAD(+) = dihydroxyacetone phosphate + NADH + H(+). The enzyme catalyses sn-glycerol 3-phosphate + NADP(+) = dihydroxyacetone phosphate + NADPH + H(+). The protein operates within membrane lipid metabolism; glycerophospholipid metabolism. In terms of biological role, catalyzes the reduction of the glycolytic intermediate dihydroxyacetone phosphate (DHAP) to sn-glycerol 3-phosphate (G3P), the key precursor for phospholipid synthesis. The polypeptide is Glycerol-3-phosphate dehydrogenase [NAD(P)+] (Tolumonas auensis (strain DSM 9187 / NBRC 110442 / TA 4)).